We begin with the raw amino-acid sequence, 135 residues long: Large ribosomal subunit protein uL16c (135 aa).

The segment covering 1–17 (MLSPKRTKFRKQHRNRM) has biased composition (basic residues). A disordered region spans residues 1–22 (MLSPKRTKFRKQHRNRMNGKAS).

The protein belongs to the universal ribosomal protein uL16 family. As to quaternary structure, part of the 50S ribosomal subunit.

It is found in the plastid. The protein resides in the chloroplast. The polypeptide is Large ribosomal subunit protein uL16c (Gracilaria tenuistipitata (Red alga)).